Here is a 325-residue protein sequence, read N- to C-terminus: Probable exonuclease subunit 1 (325 aa).

As to quaternary structure, could consist of two subunits: D13 and D12.

Functionally, possible exonuclease involved in phage DNA recombination, replication, and repair. This chain is Probable exonuclease subunit 1 (D12), found in Escherichia coli (Enterobacteria phage T5).